Here is a 154-residue protein sequence, read N- to C-terminus: Peptide deformylase (154 aa).

Residues C90 and H132 each coordinate Fe cation. Residue E133 is part of the active site. H136 is a Fe cation binding site.

The protein belongs to the polypeptide deformylase family. Fe(2+) serves as cofactor.

It catalyses the reaction N-terminal N-formyl-L-methionyl-[peptide] + H2O = N-terminal L-methionyl-[peptide] + formate. Removes the formyl group from the N-terminal Met of newly synthesized proteins. Requires at least a dipeptide for an efficient rate of reaction. N-terminal L-methionine is a prerequisite for activity but the enzyme has broad specificity at other positions. The protein is Peptide deformylase of Desulforudis audaxviator (strain MP104C).